We begin with the raw amino-acid sequence, 503 residues long: Glycerol kinase (503 aa).

Residue T14 coordinates ADP. 3 residues coordinate ATP: T14, T15, and S16. A sn-glycerol 3-phosphate-binding site is contributed by T14. R18 is a binding site for ADP. Sn-glycerol 3-phosphate is bound by residues R84, E85, Y136, and D246. Residues R84, E85, Y136, D246, and Q247 each coordinate glycerol. The ADP site is built by T268 and G311. 4 residues coordinate ATP: T268, G311, Q315, and G412. Positions 412 and 416 each coordinate ADP.

The protein belongs to the FGGY kinase family. In terms of assembly, homotetramer and homodimer (in equilibrium). Heterodimer with EIIA-Glc. Binds 1 zinc ion per glycerol kinase EIIA-Glc dimer. The zinc ion is important for dimerization.

It carries out the reaction glycerol + ATP = sn-glycerol 3-phosphate + ADP + H(+). Its pathway is polyol metabolism; glycerol degradation via glycerol kinase pathway; sn-glycerol 3-phosphate from glycerol: step 1/1. With respect to regulation, activity of this regulatory enzyme is affected by several metabolites. Allosterically and non-competitively inhibited by fructose 1,6-bisphosphate (FBP) and unphosphorylated phosphocarrier protein EIIA-Glc (III-Glc), an integral component of the bacterial phosphotransferase (PTS) system. Its function is as follows. Key enzyme in the regulation of glycerol uptake and metabolism. Catalyzes the phosphorylation of glycerol to yield sn-glycerol 3-phosphate. The chain is Glycerol kinase from Klebsiella pneumoniae (strain 342).